A 760-amino-acid chain; its full sequence is Catecholate siderophore receptor Fiu (760 aa).

The signal sequence occupies residues 1–31 (MENNRNFPARQFHSLTFFAGLCIGITPVAQA). Positions 67–175 (PVADTTRTMT…PTGSINMISK (109 aa)) constitute a TBDR plug domain. Residues 180–760 (DSGIDASASI…TFLLTANMHF (581 aa)) enclose the TBDR beta-barrel domain. Positions 743–760 (RYHPGEPRTFLLTANMHF) match the TonB C-terminal box motif.

The protein belongs to the TonB-dependent receptor family.

The protein resides in the cell outer membrane. Involved in the active transport across the outer membrane of iron complexed with catecholate siderophores such as dihydroxybenzoylserine and dihydroxybenzoate. It derives its energy for transport by interacting with the trans-periplasmic membrane protein TonB. Can also transport catechol-substituted cephalosporins. Receptor for microcins M, H47 and E492. In Escherichia coli (strain K12), this protein is Catecholate siderophore receptor Fiu (fiu).